The chain runs to 273 residues: Light-independent protochlorophyllide reductase iron-sulfur ATP-binding protein (273 aa).

ATP is bound by residues 12-17 (GIGKST) and Lys41. Ser16 serves as a coordination point for Mg(2+). The [4Fe-4S] cluster site is built by Cys97 and Cys131. 182-183 (NR) serves as a coordination point for ATP.

It belongs to the NifH/BchL/ChlL family. In terms of assembly, homodimer. Protochlorophyllide reductase is composed of three subunits; BchL, BchN and BchB. Requires [4Fe-4S] cluster as cofactor.

The catalysed reaction is chlorophyllide a + oxidized 2[4Fe-4S]-[ferredoxin] + 2 ADP + 2 phosphate = protochlorophyllide a + reduced 2[4Fe-4S]-[ferredoxin] + 2 ATP + 2 H2O. It functions in the pathway porphyrin-containing compound metabolism; bacteriochlorophyll biosynthesis (light-independent). Functionally, component of the dark-operative protochlorophyllide reductase (DPOR) that uses Mg-ATP and reduced ferredoxin to reduce ring D of protochlorophyllide (Pchlide) to form chlorophyllide a (Chlide). This reaction is light-independent. The L component serves as a unique electron donor to the NB-component of the complex, and binds Mg-ATP. The chain is Light-independent protochlorophyllide reductase iron-sulfur ATP-binding protein from Chloroflexus aurantiacus (strain ATCC 29364 / DSM 637 / Y-400-fl).